Consider the following 241-residue polypeptide: MRKSVIAGNWKMHMTCAEAKSYLEEFIPLIKNIRDDRKVVIAPPFTAISTFSKHSDFDYLDISSQNIHWEDEGAFTAEISPKMLIEHGVSYAIVGHSEPRKYFSESDEQINKRAVFAQCSGLTPIVCVGETLEQRERGEADRVITRQVEQGLENTDPSNLIVAYEPIWAIGTGKTCEAKDANNICSLIRKLIGFDDVIIQYGGSVKPNNIDEIMSMSDIDGVLVGGASLDPNSFARIANYQ.

Substrate is bound at residue 9–11; that stretch reads NWK. The active-site Electrophile is H96. Residue E165 is the Proton acceptor of the active site. Substrate contacts are provided by residues G171, S204, and 225–226; that span reads GG.

The protein belongs to the triosephosphate isomerase family. In terms of assembly, homodimer.

It is found in the cytoplasm. It carries out the reaction D-glyceraldehyde 3-phosphate = dihydroxyacetone phosphate. The protein operates within carbohydrate biosynthesis; gluconeogenesis. It functions in the pathway carbohydrate degradation; glycolysis; D-glyceraldehyde 3-phosphate from glycerone phosphate: step 1/1. Functionally, involved in the gluconeogenesis. Catalyzes stereospecifically the conversion of dihydroxyacetone phosphate (DHAP) to D-glyceraldehyde-3-phosphate (G3P). In Prochlorococcus marinus (strain MIT 9312), this protein is Triosephosphate isomerase.